Here is a 237-residue protein sequence, read N- to C-terminus: Putative N-acetylmuramoyl-L-alanine amidase (237 aa).

Residues 7-225 (ILIDAGHGGY…IANSIYLGLK (219 aa)) enclose the MurNAc-LAA domain.

It belongs to the N-acetylmuramoyl-L-alanine amidase 3 family.

The protein resides in the secreted. The enzyme catalyses Hydrolyzes the link between N-acetylmuramoyl residues and L-amino acid residues in certain cell-wall glycopeptides.. In terms of biological role, cell-wall hydrolase involved in septum cleavage during cell division. The polypeptide is Putative N-acetylmuramoyl-L-alanine amidase (amiB) (Buchnera aphidicola subsp. Acyrthosiphon pisum (strain APS) (Acyrthosiphon pisum symbiotic bacterium)).